We begin with the raw amino-acid sequence, 413 residues long: Tyrosine--tRNA ligase (413 aa).

The 'HIGH' region signature appears at proline 59–histidine 68. Positions lysine 243–serine 247 match the 'KMSKS' region motif. Residue lysine 246 participates in ATP binding. The region spanning leucine 351–leucine 411 is the S4 RNA-binding domain.

It belongs to the class-I aminoacyl-tRNA synthetase family. TyrS type 2 subfamily. In terms of assembly, homodimer.

It localises to the cytoplasm. The enzyme catalyses tRNA(Tyr) + L-tyrosine + ATP = L-tyrosyl-tRNA(Tyr) + AMP + diphosphate + H(+). Functionally, catalyzes the attachment of tyrosine to tRNA(Tyr) in a two-step reaction: tyrosine is first activated by ATP to form Tyr-AMP and then transferred to the acceptor end of tRNA(Tyr). The sequence is that of Tyrosine--tRNA ligase from Burkholderia mallei (strain ATCC 23344).